We begin with the raw amino-acid sequence, 484 residues long: MASDGHLAAPLLDGGGGVDDAALLRRLYVGHFLARWGARMWEFSVGLYMIRIWPGSLLLTAVYGVVEASAVAALGPIVGAVVDRLAYLQVLRLWLLLQGASFVAAGVSVTALLVYGARLAAAGFPAFVALVVVTNVSGALAALSTLAGTILIEREWVVVIAGGQPAAVLTGINSVIRRIDLSCKLLAPVLSGFFISFVSMEASAAALAAWNLAAVWVQYWLFVSVYAGFPALSETSQISRRRADDDEAAAAAQPQKVERLWMTMLPCWESWAVYARQEVVLPGVALAFLYFTVLSFGTLMTATLDWEGIPAYVISLARGVSAAVGIAATWVYPAAHARVSTLRAGLWSIWAQWCCLLVCVASVWAGGAAPLASAWMLMGGVAASRLGLWMFDLAVMQLMQDGVPESDRCVVGGVQNSLQSMFDLLTYVMGIIVSDPRDFGELIVLSFFLVTCAAAMYTMHVYRVRKHLFHLDRILPKMNWIKAS.

11 helical membrane passes run 58–78 (LLTA…GPIV), 94–114 (WLLL…ALLV), 123–143 (GFPA…LAAL), 189–209 (VLSG…ALAA), 212–232 (LAAV…FPAL), 279–299 (VVLP…FGTL), 308–328 (GIPA…GIAA), 346–366 (LWSI…VWAG), 377–397 (LMGG…AVMQ), 413–433 (GVQN…GIIV), and 442–462 (LIVL…MHVY).

This sequence belongs to the ferroportin (FP) (TC 2.A.100) family. SLC40A subfamily.

It is found in the membrane. Its function is as follows. May be involved in iron transport and iron homeostasis. The protein is Solute carrier family 40 member 1 of Oryza sativa subsp. japonica (Rice).